The following is a 228-amino-acid chain: L-ribulose-5-phosphate 4-epimerase UlaF (228 aa).

Substrate is bound by residues G26–N27, S43–G44, and S72–S73. Residues D74, H93, and H95 each coordinate Zn(2+). Catalysis depends on D118, which acts as the Proton donor/acceptor. Residue H167 coordinates Zn(2+). Residue Y225 is the Proton donor/acceptor of the active site.

It belongs to the aldolase class II family. AraD/FucA subfamily. It depends on Zn(2+) as a cofactor.

The enzyme catalyses L-ribulose 5-phosphate = D-xylulose 5-phosphate. Its pathway is cofactor degradation; L-ascorbate degradation; D-xylulose 5-phosphate from L-ascorbate: step 4/4. Its function is as follows. Catalyzes the isomerization of L-ribulose 5-phosphate to D-xylulose 5-phosphate. Is involved in the anaerobic L-ascorbate utilization. This chain is L-ribulose-5-phosphate 4-epimerase UlaF, found in Escherichia coli O17:K52:H18 (strain UMN026 / ExPEC).